Reading from the N-terminus, the 305-residue chain is LysM and putative peptidoglycan-binding domain-containing protein 3 (305 aa).

Topologically, residues 1-216 are extracellular; sequence MAGRNQNRTV…PYYGADWGIG (216 aa). N-linked (GlcNAc...) asparagine glycans are attached at residues asparagine 7 and asparagine 26. Serine 55 carries the phosphoserine modification. Positions 65 to 109 constitute a LysM domain; it reads LTKDIQEGDTLNAVALQYCCTVADIKRVNNLISDQDFFALRSIKI. An N-linked (GlcNAc...) asparagine glycan is attached at asparagine 199. A helical membrane pass occupies residues 217–237; that stretch reads WWTAVVIMLIVGIITPVFYLL. The Cytoplasmic segment spans residues 238-305; that stretch reads YYEILAKVDV…PQAHDAQHKT (68 aa). The interval 253 to 305 is disordered; that stretch reads VGSSHLHPGLTPPTQHREMENEIGPTKGIPVGQQDDHKLYRQDPQAHDAQHKT. A compositionally biased stretch (basic and acidic residues) spans 286–305; it reads QDDHKLYRQDPQAHDAQHKT.

It localises to the cell membrane. The protein localises to the golgi apparatus. Essential for Golgi structural integrity. This chain is LysM and putative peptidoglycan-binding domain-containing protein 3 (Lysmd3), found in Mus musculus (Mouse).